The chain runs to 132 residues: Small ribosomal subunit protein uS8 (132 aa).

Belongs to the universal ribosomal protein uS8 family. In terms of assembly, part of the 30S ribosomal subunit. Contacts proteins S5 and S12.

Its function is as follows. One of the primary rRNA binding proteins, it binds directly to 16S rRNA central domain where it helps coordinate assembly of the platform of the 30S subunit. This Streptococcus mutans serotype c (strain ATCC 700610 / UA159) protein is Small ribosomal subunit protein uS8.